A 111-amino-acid chain; its full sequence is ATP-dependent Clp protease adapter protein ClpS (111 aa).

The protein belongs to the ClpS family. As to quaternary structure, binds to the N-terminal domain of the chaperone ClpA.

Involved in the modulation of the specificity of the ClpAP-mediated ATP-dependent protein degradation. The polypeptide is ATP-dependent Clp protease adapter protein ClpS (Corynebacterium aurimucosum (strain ATCC 700975 / DSM 44827 / CIP 107346 / CN-1) (Corynebacterium nigricans)).